A 197-amino-acid chain; its full sequence is Guanylate kinase (197 aa).

The Guanylate kinase-like domain occupies 6 to 191; that stretch reads SKLIILSGPS…CVAQIEKIIS (186 aa). 13 to 20 provides a ligand contact to ATP; that stretch reads GPSGVGKG.

The protein belongs to the guanylate kinase family.

It localises to the cytoplasm. It carries out the reaction GMP + ATP = GDP + ADP. Its function is as follows. Essential for recycling GMP and indirectly, cGMP. This Mesomycoplasma hyopneumoniae (strain 232) (Mycoplasma hyopneumoniae) protein is Guanylate kinase.